The sequence spans 35 residues: uncharacterized protein (35 aa).

A helical membrane pass occupies residues 14-34 (VVVLLAICGAMLLLRWAAMIW).

It is found in the membrane. This is an uncharacterized protein from Escherichia coli (strain K12).